The chain runs to 53 residues: UPF0391 membrane protein PC1_0455 (53 aa).

Transmembrane regions (helical) follow at residues 4-24 and 30-47; these read WGIIFLVIALIAAALGFGGLA and AAKIVFVVGIILFLLSLF.

The protein belongs to the UPF0391 family.

It is found in the cell membrane. The chain is UPF0391 membrane protein PC1_0455 from Pectobacterium carotovorum subsp. carotovorum (strain PC1).